The primary structure comprises 348 residues: Isopentenyl-diphosphate delta-isomerase (348 aa).

Residue 9 to 10 coordinates substrate; the sequence is RK. FMN-binding positions include 68–70, serine 98, and asparagine 127; that span reads AMT. Position 157 (glutamine 157) interacts with substrate. Glutamate 158 provides a ligand contact to Mg(2+). FMN is bound by residues lysine 188, serine 213, threonine 218, and 286–287; that span reads AG.

It belongs to the IPP isomerase type 2 family. Homooctamer. Dimer of tetramers. It depends on FMN as a cofactor. The cofactor is NADPH. Mg(2+) serves as cofactor.

It localises to the cytoplasm. It carries out the reaction isopentenyl diphosphate = dimethylallyl diphosphate. Involved in the biosynthesis of isoprenoids. Catalyzes the 1,3-allylic rearrangement of the homoallylic substrate isopentenyl (IPP) to its allylic isomer, dimethylallyl diphosphate (DMAPP). This chain is Isopentenyl-diphosphate delta-isomerase, found in Limosilactobacillus reuteri (strain DSM 20016) (Lactobacillus reuteri).